Consider the following 209-residue polypeptide: Glutathione S-transferase 1-1 (209 aa).

Residues 1–81 (MADFYYLPGS…YLVEKYGKTD (81 aa)) enclose the GST N-terminal domain. Residues serine 10, 51–53 (HTI), and 65–67 (ESR) contribute to the glutathione site. In terms of domain architecture, GST C-terminal spans 87–209 (CPKKRAVINQ…GCLEFKKYFE (123 aa)).

Belongs to the GST superfamily. Theta family. As to quaternary structure, homodimer.

The enzyme catalyses RX + glutathione = an S-substituted glutathione + a halide anion + H(+). It carries out the reaction 1,1,1-trichloro-2,2-bis(4-chlorophenyl)ethane = 1,1-dichloro-2,2-bis(4-chlorophenyl)ethylene + chloride + H(+). Functionally, conjugation of reduced glutathione to a wide number of exogenous and endogenous hydrophobic electrophiles. Has DDT dehydrochlorinase activity. The polypeptide is Glutathione S-transferase 1-1 (GstD1) (Drosophila simulans (Fruit fly)).